A 541-amino-acid polypeptide reads, in one-letter code: Chaperonin GroEL (541 aa).

Residues 29–32, 86–90, Gly413, 476–478, and Asp492 contribute to the ATP site; these read TLGP, DGTTT, and NAA.

It belongs to the chaperonin (HSP60) family. Forms a cylinder of 14 subunits composed of two heptameric rings stacked back-to-back. Interacts with the co-chaperonin GroES.

Its subcellular location is the cytoplasm. It catalyses the reaction ATP + H2O + a folded polypeptide = ADP + phosphate + an unfolded polypeptide.. Functionally, together with its co-chaperonin GroES, plays an essential role in assisting protein folding. The GroEL-GroES system forms a nano-cage that allows encapsulation of the non-native substrate proteins and provides a physical environment optimized to promote and accelerate protein folding. This chain is Chaperonin GroEL, found in Streptococcus equi subsp. zooepidemicus (strain MGCS10565).